The sequence spans 553 residues: MVPVEDLVYRYALLNAVKHRGRANPGAVMGAVMSNEPELRKMAPQVKEAVEAAVERVNSLSPEEQQQEMERLGLEITERKQKKRKGLRELAGVKGEVVLRFAPNPSGPLHIGHARAAILNHEYARKYDGRLILRIEDTDPRRVDPEAYDMIPADLEWLGVEWDETVIQSDRMETYYEYTEKLIERGGAYVCTCRPEEFRELKNRGEACHCRSLGFRENLQRWREMFEMKEGSAVVRVKTDLNHPNPAIRDWVSMRIVEAEHPRTGTRYRVYPMMNFSVAVDDHLLGVTHVLRGKDHLANREKQEYLYRHLGWEPPEFIHYGRLKMDDVALSTSGAREGILRGEYSGWDDPRLGTLRAIARRGIRPEAIRKLMVEIGVKIADSTMSWKKIYGLNRSILEEEARRYFFAADPVKLEVVGLPGPVRVERPLHPDHPEIGNRVLELRGEVYLPGDDLGEGPLRLIDAVNVIYSGGELRYHSEGIEEARELGASMIHWVPAESALEAEVIMPDASRVRGVIEADASELEVDDVVQLERFGFARLDSAGPGMVFYYAHK.

Positions 103-113 match the 'HIGH' region motif; sequence PNPSGPLHIGH.

The protein belongs to the class-I aminoacyl-tRNA synthetase family. Glutamate--tRNA ligase type 2 subfamily.

The protein localises to the cytoplasm. It carries out the reaction tRNA(Glu) + L-glutamate + ATP = L-glutamyl-tRNA(Glu) + AMP + diphosphate. In terms of biological role, catalyzes the attachment of glutamate to tRNA(Glu) in a two-step reaction: glutamate is first activated by ATP to form Glu-AMP and then transferred to the acceptor end of tRNA(Glu). The protein is Glutamate--tRNA ligase of Methanothermobacter thermautotrophicus (strain ATCC 29096 / DSM 1053 / JCM 10044 / NBRC 100330 / Delta H) (Methanobacterium thermoautotrophicum).